The sequence spans 740 residues: Catalase-peroxidase (740 aa).

Positions 107–229 (WHAAGTYRIH…LAAVQMGLIY (123 aa)) form a cross-link, tryptophyl-tyrosyl-methioninium (Trp-Tyr) (with M-255). His-108 serves as the catalytic Proton acceptor. The segment at residues 229–255 (YVNPEGPNGNPDPMAAAVDIRETFRRM) is a cross-link (tryptophyl-tyrosyl-methioninium (Tyr-Met) (with W-107)). Position 270 (His-270) interacts with heme b.

This sequence belongs to the peroxidase family. Peroxidase/catalase subfamily. As to quaternary structure, homodimer. Heme b serves as cofactor. Formation of the three residue Trp-Tyr-Met cross-link is important for the catalase, but not the peroxidase activity of the enzyme.

The enzyme catalyses H2O2 + AH2 = A + 2 H2O. It catalyses the reaction 2 H2O2 = O2 + 2 H2O. Its function is as follows. Bifunctional enzyme with both catalase and broad-spectrum peroxidase activity. May play a role in the intracellular survival of mycobacteria. The protein is Catalase-peroxidase of Mycobacterium bovis (strain ATCC BAA-935 / AF2122/97).